Consider the following 578-residue polypeptide: Zinc finger protein with KRAB and SCAN domains 8 (578 aa).

The interval 1 to 20 (MAEESRKPSAPSPPDQTPEE) is disordered. Serine 12 is modified (phosphoserine). Lysine 26 is covalently cross-linked (Glycyl lysine isopeptide (Lys-Gly) (interchain with G-Cter in SUMO2)). In terms of domain architecture, SCAN box spans 51-133 (RLRFRQLRYQ…TLLEDLERQI (83 aa)). The interval 158–205 (ASAPEPPNTQLQSEATQHKSPVPQESQERAMSTSQSPTRSQKGSSGDQ) is disordered. Polar residues predominate over residues 165-205 (NTQLQSEATQHKSPVPQESQERAMSTSQSPTRSQKGSSGDQ). Residues lysine 176 and lysine 199 each participate in a glycyl lysine isopeptide (Lys-Gly) (interchain with G-Cter in SUMO2) cross-link. The residue at position 201 (serine 201) is a Phosphoserine. The KRAB domain maps to 220–316 (EKIEDMAVSL…GRLERQRGNP (97 aa)). Glycyl lysine isopeptide (Lys-Gly) (interchain with G-Cter in SUMO2) cross-links involve residues lysine 221, lysine 272, and lysine 288. 2 consecutive C2H2-type zinc fingers follow at residues 322 to 344 (HKCD…WRIH) and 350 to 372 (YQCN…QDIH). Glycyl lysine isopeptide (Lys-Gly) (interchain with G-Cter in SUMO2) cross-links involve residues lysine 374 and lysine 376. 7 consecutive C2H2-type zinc fingers follow at residues 378-400 (YHCK…QRIH), 406-428 (YQCN…QRIH), 434-456 (YECN…QRIH), 462-484 (YECD…QRSH), 490-512 (YKCN…QRIH), 518-540 (YKCK…LRIH), and 546-568 (YQCN…QRIH). Glycyl lysine isopeptide (Lys-Gly) (interchain with G-Cter in SUMO2) cross-links involve residues lysine 413 and lysine 441. Lysine 502 is covalently cross-linked (Glycyl lysine isopeptide (Lys-Gly) (interchain with G-Cter in SUMO2)). Lysine 572 is covalently cross-linked (Glycyl lysine isopeptide (Lys-Gly) (interchain with G-Cter in SUMO2)).

Belongs to the krueppel C2H2-type zinc-finger protein family.

Its subcellular location is the nucleus. Its function is as follows. May be involved in transcriptional regulation. This Homo sapiens (Human) protein is Zinc finger protein with KRAB and SCAN domains 8 (ZKSCAN8).